The sequence spans 71 residues: Movement protein TGBp3 (71 aa).

Residues 1–3 lie on the Lumenal side of the membrane; sequence MEA. A helical transmembrane segment spans residues 4–26; the sequence is GAYLNAIIFVLVATIIAVISVGL. Topologically, residues 27 to 71 are cytoplasmic; that stretch reads TQTEPCTIRITGESITVHACHLDSETIKALATLKPLSLERLSFHQ.

Belongs to the Tymovirales TGBp3 protein family.

The protein resides in the host endoplasmic reticulum membrane. Its function is as follows. Plays a role in viral cell-to-cell propagation, by facilitating genome transport to neighboring plant cells through plasmosdesmata. May induce the formation of granular vesicles derived from the Endoplasmic reticulum, which align on actin filaments. The polypeptide is Movement protein TGBp3 (Brassica campestris (Field mustard)).